A 541-amino-acid polypeptide reads, in one-letter code: Zinc finger protein 329 (541 aa).

At Ser-50 the chain carries Phosphoserine. C2H2-type zinc fingers lie at residues 203 to 225, 231 to 253, 259 to 281, 287 to 309, 315 to 337, 343 to 365, 371 to 393, 399 to 421, 427 to 449, 455 to 477, 483 to 505, and 511 to 533; these read YRCT…HRTH, YTCN…QRIH, YECS…QRIH, YECL…QRTH, YRCN…LRIH, YECS…ERTH, FECA…QKIH, YECK…QRIH, YGCN…QRTH, YECN…QRIH, YQCP…QRLH, and SRCP…QRAH.

It belongs to the krueppel C2H2-type zinc-finger protein family.

Its subcellular location is the nucleus. Functionally, may be involved in transcriptional regulation. This is Zinc finger protein 329 (ZNF329) from Homo sapiens (Human).